Here is a 106-residue protein sequence, read N- to C-terminus: MTEFKRIPPEQAQALREQGAVLVDVRDPQAFESNHIPDSVHLDNHSIADFIREADLDKPLVVVCYHGNSSQSAAAYLVGQGFSDVYSVDGGFELWRTTYPQETVQG.

A Rhodanese domain is found at 16 to 104 (REQGAVLVDV…WRTTYPQETV (89 aa)). Catalysis depends on cysteine 64, which acts as the Cysteine persulfide intermediate.

The protein belongs to the GlpE family.

The protein localises to the cytoplasm. It carries out the reaction thiosulfate + hydrogen cyanide = thiocyanate + sulfite + 2 H(+). The enzyme catalyses thiosulfate + [thioredoxin]-dithiol = [thioredoxin]-disulfide + hydrogen sulfide + sulfite + 2 H(+). Functionally, transferase that catalyzes the transfer of sulfur from thiosulfate to thiophilic acceptors such as cyanide or dithiols. May function in a CysM-independent thiosulfate assimilation pathway by catalyzing the conversion of thiosulfate to sulfite, which can then be used for L-cysteine biosynthesis. The polypeptide is Thiosulfate sulfurtransferase GlpE (Pseudomonas syringae pv. syringae (strain B728a)).